The chain runs to 265 residues: NAD kinase 2 (265 aa).

Catalysis depends on N51, which acts as the Proton acceptor. NAD(+)-binding positions include 122-123 (NE), R149, D151, 162-167 (TAYNKS), A186, and N226.

This sequence belongs to the NAD kinase family. A divalent metal cation serves as cofactor.

The protein localises to the cytoplasm. The enzyme catalyses NAD(+) + ATP = ADP + NADP(+) + H(+). In terms of biological role, involved in the regulation of the intracellular balance of NAD and NADP, and is a key enzyme in the biosynthesis of NADP. Catalyzes specifically the phosphorylation on 2'-hydroxyl of the adenosine moiety of NAD to yield NADP. The chain is NAD kinase 2 from Halalkalibacterium halodurans (strain ATCC BAA-125 / DSM 18197 / FERM 7344 / JCM 9153 / C-125) (Bacillus halodurans).